A 334-amino-acid polypeptide reads, in one-letter code: S-adenosylmethionine decarboxylase proenzyme 2 (334 aa).

Phenylalanine 7 serves as a coordination point for substrate. Active-site residues include glutamate 8 and glutamate 11. Glutamate 67 contributes to the substrate binding site. Serine 68 acts as the Schiff-base intermediate with substrate; via pyruvic acid in catalysis. A Pyruvic acid (Ser); by autocatalysis modification is found at serine 68. Cysteine 82 serves as the catalytic Proton donor; for catalytic activity. Position 223 (phenylalanine 223) interacts with substrate. Catalysis depends on proton acceptor; for processing activity residues serine 229 and histidine 243. Glutamate 247 serves as a coordination point for substrate. Phosphoserine is present on serine 298.

It belongs to the eukaryotic AdoMetDC family. Heterotetramer of two alpha and two beta chains. Pyruvate is required as a cofactor. In terms of processing, is synthesized initially as an inactive proenzyme. Formation of the active enzyme involves a self-maturation process in which the active site pyruvoyl group is generated from an internal serine residue via an autocatalytic post-translational modification. Two non-identical subunits are generated from the proenzyme in this reaction, and the pyruvate is formed at the N-terminus of the alpha chain, which is derived from the carboxyl end of the proenzyme. The post-translation cleavage follows an unusual pathway, termed non-hydrolytic serinolysis, in which the side chain hydroxyl group of the serine supplies its oxygen atom to form the C-terminus of the beta chain, while the remainder of the serine residue undergoes an oxidative deamination to produce ammonia and the pyruvoyl group blocking the N-terminus of the alpha chain.

The catalysed reaction is S-adenosyl-L-methionine + H(+) = S-adenosyl 3-(methylsulfanyl)propylamine + CO2. Its pathway is amine and polyamine biosynthesis; S-adenosylmethioninamine biosynthesis; S-adenosylmethioninamine from S-adenosyl-L-methionine: step 1/1. Essential for biosynthesis of the polyamines spermidine and spermine. Promotes maintenance and self-renewal of embryonic stem cells, by maintaining spermine levels. This is S-adenosylmethionine decarboxylase proenzyme 2 (Amd2) from Mus spretus (Western Mediterranean mouse).